The primary structure comprises 252 residues: 2-succinyl-6-hydroxy-2,4-cyclohexadiene-1-carboxylate synthase (252 aa).

Belongs to the AB hydrolase superfamily. MenH family. In terms of assembly, monomer.

The enzyme catalyses 5-enolpyruvoyl-6-hydroxy-2-succinyl-cyclohex-3-ene-1-carboxylate = (1R,6R)-6-hydroxy-2-succinyl-cyclohexa-2,4-diene-1-carboxylate + pyruvate. The protein operates within quinol/quinone metabolism; 1,4-dihydroxy-2-naphthoate biosynthesis; 1,4-dihydroxy-2-naphthoate from chorismate: step 3/7. It participates in quinol/quinone metabolism; menaquinone biosynthesis. Functionally, catalyzes a proton abstraction reaction that results in 2,5-elimination of pyruvate from 2-succinyl-5-enolpyruvyl-6-hydroxy-3-cyclohexene-1-carboxylate (SEPHCHC) and the formation of 2-succinyl-6-hydroxy-2,4-cyclohexadiene-1-carboxylate (SHCHC). The protein is 2-succinyl-6-hydroxy-2,4-cyclohexadiene-1-carboxylate synthase of Escherichia coli O8 (strain IAI1).